We begin with the raw amino-acid sequence, 75 residues long: Small ribosomal subunit protein bS18 (75 aa).

It belongs to the bacterial ribosomal protein bS18 family. As to quaternary structure, part of the 30S ribosomal subunit. Forms a tight heterodimer with protein bS6.

Its function is as follows. Binds as a heterodimer with protein bS6 to the central domain of the 16S rRNA, where it helps stabilize the platform of the 30S subunit. The sequence is that of Small ribosomal subunit protein bS18 from Vibrio atlanticus (strain LGP32) (Vibrio splendidus (strain Mel32)).